The chain runs to 209 residues: Octanoyltransferase (209 aa).

The BPL/LPL catalytic domain maps to 30-209 (DHKPEIIYLV…IQTEFNKIFK (180 aa)). Substrate is bound by residues 69–76 (RGGKFTFH), 143–145 (AIG), and 156–158 (GVA). Cys-174 functions as the Acyl-thioester intermediate in the catalytic mechanism.

This sequence belongs to the LipB family.

It localises to the cytoplasm. It catalyses the reaction octanoyl-[ACP] + L-lysyl-[protein] = N(6)-octanoyl-L-lysyl-[protein] + holo-[ACP] + H(+). The protein operates within protein modification; protein lipoylation via endogenous pathway; protein N(6)-(lipoyl)lysine from octanoyl-[acyl-carrier-protein]: step 1/2. In terms of biological role, catalyzes the transfer of endogenously produced octanoic acid from octanoyl-acyl-carrier-protein onto the lipoyl domains of lipoate-dependent enzymes. Lipoyl-ACP can also act as a substrate although octanoyl-ACP is likely to be the physiological substrate. In Rickettsia conorii (strain ATCC VR-613 / Malish 7), this protein is Octanoyltransferase.